Reading from the N-terminus, the 337-residue chain is GTP 3',8-cyclase (337 aa).

Residues 17–242 (TFQREYYYLR…RQKDRTDGPA (226 aa)) enclose the Radical SAM core domain. Arg-26 serves as a coordination point for GTP. The [4Fe-4S] cluster site is built by Cys-33 and Cys-37. S-adenosyl-L-methionine is bound at residue Tyr-39. Residue Cys-40 participates in [4Fe-4S] cluster binding. Arg-76 is a GTP binding site. S-adenosyl-L-methionine is bound at residue Gly-80. A GTP-binding site is contributed by Thr-107. An S-adenosyl-L-methionine-binding site is contributed by Ser-131. Lys-168 provides a ligand contact to GTP. An S-adenosyl-L-methionine-binding site is contributed by Met-202. The [4Fe-4S] cluster site is built by Cys-265 and Cys-268. 270-272 (RLR) is a binding site for GTP. Cys-282 provides a ligand contact to [4Fe-4S] cluster.

This sequence belongs to the radical SAM superfamily. MoaA family. Monomer and homodimer. Requires [4Fe-4S] cluster as cofactor.

It carries out the reaction GTP + AH2 + S-adenosyl-L-methionine = (8S)-3',8-cyclo-7,8-dihydroguanosine 5'-triphosphate + 5'-deoxyadenosine + L-methionine + A + H(+). Its pathway is cofactor biosynthesis; molybdopterin biosynthesis. In terms of biological role, catalyzes the cyclization of GTP to (8S)-3',8-cyclo-7,8-dihydroguanosine 5'-triphosphate. The sequence is that of GTP 3',8-cyclase from Mannheimia succiniciproducens (strain KCTC 0769BP / MBEL55E).